The primary structure comprises 342 residues: Phosphate acyltransferase (342 aa).

This sequence belongs to the PlsX family. Homodimer. Probably interacts with PlsY.

The protein resides in the cytoplasm. The catalysed reaction is a fatty acyl-[ACP] + phosphate = an acyl phosphate + holo-[ACP]. It functions in the pathway lipid metabolism; phospholipid metabolism. Catalyzes the reversible formation of acyl-phosphate (acyl-PO(4)) from acyl-[acyl-carrier-protein] (acyl-ACP). This enzyme utilizes acyl-ACP as fatty acyl donor, but not acyl-CoA. The polypeptide is Phosphate acyltransferase (Shewanella putrefaciens (strain CN-32 / ATCC BAA-453)).